Here is a 123-residue protein sequence, read N- to C-terminus: UPF0382 membrane protein YwdK (123 aa).

4 helical membrane passes run 3–23 (VFII…AFGA), 49–69 (ALGL…GSVT), 71–91 (AGWL…ILSV), and 96–116 (ILGA…IMIV).

Belongs to the UPF0382 family.

It is found in the cell membrane. This is UPF0382 membrane protein YwdK (ywdK) from Bacillus subtilis (strain 168).